A 117-amino-acid chain; its full sequence is Large ribosomal subunit protein bL19 (117 aa).

The protein belongs to the bacterial ribosomal protein bL19 family.

Functionally, this protein is located at the 30S-50S ribosomal subunit interface and may play a role in the structure and function of the aminoacyl-tRNA binding site. The polypeptide is Large ribosomal subunit protein bL19 (Paenarthrobacter aurescens (strain TC1)).